A 165-amino-acid chain; its full sequence is V-type proton ATPase subunit c2 (165 aa).

At 1-12 (MASTFSGDETAP) the chain is on the lumenal side. The chain crosses the membrane as a helical span at residues 13–33 (FFGFLGAAAALVFSCMGAAYG). Topologically, residues 34–55 (TAKSGVGVASMGVMRPELVMKS) are cytoplasmic. Residues 56–76 (IVPVVMAGVLGIYGLIIAVII) traverse the membrane as a helical segment. Over 77–95 (STGINPKAKSYYLFDGYAH) the chain is Lumenal. The helical transmembrane segment at 96-117 (LSSGLACGLAGLSAGMAIGIVG) threads the bilayer. Topologically, residues 118 to 129 (DAGVRANAQQPK) are cytoplasmic. The helical transmembrane segment at 130 to 155 (LFVGMILILIFAEALALYGLIVGIIL) threads the bilayer. Residues 156–165 (SSRAGQSRAE) lie on the Lumenal side of the membrane.

The protein belongs to the V-ATPase proteolipid subunit family. In terms of assembly, V-ATPase is a heteromultimeric enzyme composed of a peripheral catalytic V1 complex (components A to H) attached to an integral membrane V0 proton pore complex (components: a, c, c'', d and e). The proteolipid components c and c'' are present as a hexameric ring that forms the proton-conducting pore. Expressed in leaf, root, flower and silique, with lower expression in roots.

Its subcellular location is the vacuole membrane. Functionally, proton-conducting pore forming subunit of the membrane integral V0 complex of vacuolar ATPase. V-ATPase is responsible for acidifying a variety of intracellular compartments in eukaryotic cells. The chain is V-type proton ATPase subunit c2 (VHA-c2) from Arabidopsis thaliana (Mouse-ear cress).